The following is a 299-amino-acid chain: Ribosomal RNA small subunit methyltransferase H (299 aa).

S-adenosyl-L-methionine contacts are provided by residues 36–38 (GGH), Asp-55, Tyr-82, Asp-103, and Gln-110. Basic and acidic residues-rich tracts occupy residues 269–282 (PVRPSEEEIRENPR) and 289–299 (RAAERIEEGGD). The segment at 269–299 (PVRPSEEEIRENPRARSGRLRAAERIEEGGD) is disordered.

It belongs to the methyltransferase superfamily. RsmH family.

It is found in the cytoplasm. The catalysed reaction is cytidine(1402) in 16S rRNA + S-adenosyl-L-methionine = N(4)-methylcytidine(1402) in 16S rRNA + S-adenosyl-L-homocysteine + H(+). Its function is as follows. Specifically methylates the N4 position of cytidine in position 1402 (C1402) of 16S rRNA. The sequence is that of Ribosomal RNA small subunit methyltransferase H from Thermotoga maritima (strain ATCC 43589 / DSM 3109 / JCM 10099 / NBRC 100826 / MSB8).